Consider the following 333-residue polypeptide: tRNA N6-adenosine threonylcarbamoyltransferase (333 aa).

Fe cation-binding residues include His-111 and His-115. Substrate is bound by residues 134–138, Asp-167, Gly-180, Asp-184, and Asn-273; that span reads VVSGG. Residue Asp-302 coordinates Fe cation.

The protein belongs to the KAE1 / TsaD family. Requires Fe(2+) as cofactor.

It localises to the cytoplasm. It carries out the reaction L-threonylcarbamoyladenylate + adenosine(37) in tRNA = N(6)-L-threonylcarbamoyladenosine(37) in tRNA + AMP + H(+). Required for the formation of a threonylcarbamoyl group on adenosine at position 37 (t(6)A37) in tRNAs that read codons beginning with adenine. Is involved in the transfer of the threonylcarbamoyl moiety of threonylcarbamoyl-AMP (TC-AMP) to the N6 group of A37, together with TsaE and TsaB. TsaD likely plays a direct catalytic role in this reaction. The protein is tRNA N6-adenosine threonylcarbamoyltransferase of Anaeromyxobacter sp. (strain Fw109-5).